The following is a 485-amino-acid chain: MNLKELLHNIDIDAKVYGKISPIEVRNLTKDSRNIGFGDIFIANKGKRCDGNDFASLAVENGAIAVVSSIYNPFLSVVQIISPNLSLLEAQLAAKYYNYPSRKLCVVGITGTNGKTTVSHLIKFLFDACDKPSGLIGTIEHILGNNRIQDGFTTPESCLLQKYLAEMVKSNLTAAVIETSSIGLVLDRLANVEFDVGVLTNVTLDHLDFHDSFEEYIKAKLQLFAQLSDSGLAVVNNDLPQAKQFLEATRAVPVTYGIEQLADYRASNLRFSPFGADFDLIHKGEIFPCHSPLIGQYNVYNVLAAIAVTHQRLNCDLQQLVSLVASVKSPRGRLEPIQSGPCPIYIDYAHTPDALDNVCQTLRTLLPSGGKLIVVFGCGGDRDRSKRKIMAQVVEKYGFAVVTSDNPRGEDPETIVNEICSGFVKRNFSIEIDRKQAITYALSIASDRDIVLVAGKGHETYQIFKHQTIAFDDREVVHEVLSSYV.

Serine 32 lines the UDP-N-acetyl-alpha-D-muramoyl-L-alanyl-D-glutamate pocket. 111–117 (GTNGKTT) contributes to the ATP binding site. UDP-N-acetyl-alpha-D-muramoyl-L-alanyl-D-glutamate is bound by residues 153 to 154 (TT), serine 180, and arginine 188. Lysine 220 bears the N6-carboxylysine mark. Meso-2,6-diaminopimelate-binding positions include arginine 382, 405–408 (DNPR), glycine 455, and glutamate 459. The Meso-diaminopimelate recognition motif motif lies at 405–408 (DNPR).

This sequence belongs to the MurCDEF family. MurE subfamily. Mg(2+) serves as cofactor. Carboxylation is probably crucial for Mg(2+) binding and, consequently, for the gamma-phosphate positioning of ATP.

Its subcellular location is the cytoplasm. The enzyme catalyses UDP-N-acetyl-alpha-D-muramoyl-L-alanyl-D-glutamate + meso-2,6-diaminopimelate + ATP = UDP-N-acetyl-alpha-D-muramoyl-L-alanyl-gamma-D-glutamyl-meso-2,6-diaminopimelate + ADP + phosphate + H(+). It functions in the pathway cell wall biogenesis; peptidoglycan biosynthesis. Functionally, catalyzes the addition of meso-diaminopimelic acid to the nucleotide precursor UDP-N-acetylmuramoyl-L-alanyl-D-glutamate (UMAG) in the biosynthesis of bacterial cell-wall peptidoglycan. This chain is UDP-N-acetylmuramoyl-L-alanyl-D-glutamate--2,6-diaminopimelate ligase, found in Chlamydia felis (strain Fe/C-56) (Chlamydophila felis).